The following is a 328-amino-acid chain: CMP-N-acetylneuraminate-beta-galactosamide-alpha-2,3-sialyltransferase 4 (328 aa).

The Cytoplasmic portion of the chain corresponds to 1–7 (MCPAGWK). The helical; Signal-anchor for type II membrane protein transmembrane segment at 8-25 (LLAMLALVLVVMVWYSIS) threads the bilayer. Residues 26–328 (REDSFYFPIP…MGAVKNLTSF (303 aa)) are Lumenal-facing. 4 N-linked (GlcNAc...) asparagine glycosylation sites follow: asparagine 56, asparagine 126, asparagine 305, and asparagine 324. A disulfide bridge links cysteine 115 with cysteine 268.

Belongs to the glycosyltransferase 29 family. Post-translationally, the soluble form derives from the membrane form by proteolytic processing.

The protein resides in the golgi apparatus. Its subcellular location is the golgi stack membrane. It localises to the secreted. It carries out the reaction a beta-D-galactosyl-(1-&gt;3)-N-acetyl-beta-D-galactosaminyl derivative + CMP-N-acetyl-beta-neuraminate = an N-acetyl-alpha-neuraminyl-(2-&gt;3)-beta-D-galactosyl-(1-&gt;3)-N-acetyl-beta-D-galactosaminyl derivative + CMP + H(+). It catalyses the reaction a beta-D-galactosyl-(1-&gt;3)-N-acetyl-alpha-D-galactosaminyl derivative + CMP-N-acetyl-beta-neuraminate = an N-acetyl-alpha-neuraminyl-(2-&gt;3)-beta-D-galactosyl-(1-&gt;3)-N-acetyl-alpha-D-galactosaminyl derivative + CMP + H(+). The catalysed reaction is a beta-D-galactosyl-(1-&gt;4)-N-acetyl-beta-D-glucosaminyl derivative + CMP-N-acetyl-beta-neuraminate = an N-acetyl-alpha-neuraminyl-(2-&gt;3)-beta-D-galactosyl-(1-&gt;4)-N-acetyl-beta-D-glucosaminyl derivative + CMP + H(+). The enzyme catalyses a ganglioside GM1 (d18:1(4E)) + CMP-N-acetyl-beta-neuraminate = a ganglioside GD1a (d18:1(4E)) + CMP + H(+). It carries out the reaction a ganglioside GA1 (d18:1(4E)) + CMP-N-acetyl-beta-neuraminate = a ganglioside GM1b (d18:1(4E)) + CMP + H(+). It catalyses the reaction a ganglioside GT1c (d18:1(4E)) + CMP-N-acetyl-beta-neuraminate = a ganglioside GQ1c (d18:1(4E)) + CMP + H(+). The catalysed reaction is a neolactoside nLc4Cer + CMP-N-acetyl-beta-neuraminate = a neolactoside IV(3)-alpha-NeuAc-nLc4Cer + CMP + H(+). The enzyme catalyses a neolactoside nLc4Cer(d18:1(4E)) + CMP-N-acetyl-beta-neuraminate = a neolactoside IV(3)-alpha-NeuAc-nLc4Cer(d18:1(4E)) + CMP + H(+). It participates in protein modification; protein glycosylation. Its pathway is glycolipid biosynthesis. A beta-galactoside alpha2-3 sialyltransferase involved in terminal sialylation of glycoproteins and glycolipids. Catalyzes the transfer of sialic acid (N-acetyl-neuraminic acid; Neu5Ac) from the nucleotide sugar donor CMP-Neu5Ac onto acceptor Galbeta-(1-&gt;3)-GalNAc- and Galbeta-(1-&gt;4)-GlcNAc-terminated glycoconjugates through an alpha2-3 linkage. Plays a major role in hemostasis. Responsible for sialylation of plasma VWF/von Willebrand factor, preventing its recognition by asialoglycoprotein receptors (ASGPR) and subsequent clearance. Regulates ASGPR-mediated clearance of platelets. Participates in the biosynthesis of the sialyl Lewis X epitopes, both on O- and N-glycans, which are recognized by SELE/E-selectin, SELP/P-selectin and SELL/L-selectin. Essential for selectin-mediated rolling and adhesion of leukocytes during extravasation. Contributes to adhesion and transendothelial migration of neutrophils likely through terminal sialylation of CXCR2. In glycosphingolipid biosynthesis, sialylates GM1 and GA1 gangliosides to form GD1a and GM1b, respectively. Metabolizes brain c-series ganglioside GT1c forming GQ1c. Synthesizes ganglioside LM1 (IV3Neu5Ac-nLc4Cer), a major structural component of peripheral nerve myelin. The protein is CMP-N-acetylneuraminate-beta-galactosamide-alpha-2,3-sialyltransferase 4 (ST3GAL4) of Pan troglodytes (Chimpanzee).